The chain runs to 877 residues: Leucine--tRNA ligase (877 aa).

A 'HIGH' region motif is present at residues 48–58 (PYPSGKLHMGH). Positions 636-640 (KMSKS) match the 'KMSKS' region motif. Lys-639 contributes to the ATP binding site.

The protein belongs to the class-I aminoacyl-tRNA synthetase family.

Its subcellular location is the cytoplasm. The enzyme catalyses tRNA(Leu) + L-leucine + ATP = L-leucyl-tRNA(Leu) + AMP + diphosphate. This chain is Leucine--tRNA ligase, found in Ralstonia pickettii (strain 12J).